The primary structure comprises 175 residues: Co-chaperone protein HscB homolog (175 aa).

Residues 7 to 79 (SHFDLFHLPA…LKRATYLLHL (73 aa)) enclose the J domain.

This sequence belongs to the HscB family. In terms of assembly, interacts with HscA and stimulates its ATPase activity.

Co-chaperone involved in the maturation of iron-sulfur cluster-containing proteins. Seems to help targeting proteins to be folded toward HscA. The sequence is that of Co-chaperone protein HscB homolog from Burkholderia mallei (strain ATCC 23344).